A 694-amino-acid chain; its full sequence is Long-chain-fatty-acid--CoA ligase 4 (694 aa).

Residues 1-21 (MTEQYSVAVGEAANEHETAPR) are disordered. Position 269–280 (269–280 (YTSGSTGTPKGV)) interacts with ATP. The FACS signature appears at 527 to 576 (DGWFRTGDIAEWTPKGQVKIIDRKKNLVKTLNGEYIALEKLESIYRSNPY).

This sequence belongs to the ATP-dependent AMP-binding enzyme family. As to quaternary structure, interacts with FAT1. Requires Mg(2+) as cofactor.

The protein localises to the lipid droplet. The enzyme catalyses a long-chain fatty acid + ATP + CoA = a long-chain fatty acyl-CoA + AMP + diphosphate. The catalysed reaction is (9Z)-hexadecenoate + ATP + CoA = (9Z)-hexadecenoyl-CoA + AMP + diphosphate. It carries out the reaction (9Z)-octadecenoate + ATP + CoA = (9Z)-octadecenoyl-CoA + AMP + diphosphate. It catalyses the reaction hexadecanoate + ATP + CoA = hexadecanoyl-CoA + AMP + diphosphate. In terms of biological role, activates long-chain fatty acids (LCFA) by esterification of the fatty acids into metabolically active CoA-thioesters for subsequent degradation or incorporation into phospholipids. Also facilitates the transport of LCFAs into the cell, either by active transport or by decreasing the intracellular LCFA concentration. Contributes, with FAA1, to the activation of imported myristate. Also involved in long-chain base (LCB) uptake. In contrast ot LCFA uptake, LCB uptake does not require ATP, suggesting that the enzyme is directly involved in LCB uptake. Involved in the sphingolipid-to-glycerolipid metabolic pathway, converting the sphingolipid metabolite hexadecenoic acid to hexadecenoyl-CoA, which is then further converted to glycerolipids. This is Long-chain-fatty-acid--CoA ligase 4 (FAA4) from Saccharomyces cerevisiae (strain ATCC 204508 / S288c) (Baker's yeast).